A 362-amino-acid chain; its full sequence is 3-dehydroquinate synthase (362 aa).

NAD(+)-binding positions include 72–77 (SGEEAK), 106–110 (GVTGD), 130–131 (TT), Lys-142, and Lys-151. The Zn(2+) site is built by Glu-184, His-246, and His-263.

Belongs to the sugar phosphate cyclases superfamily. Dehydroquinate synthase family. It depends on Co(2+) as a cofactor. Zn(2+) serves as cofactor. The cofactor is NAD(+).

Its subcellular location is the cytoplasm. It catalyses the reaction 7-phospho-2-dehydro-3-deoxy-D-arabino-heptonate = 3-dehydroquinate + phosphate. The protein operates within metabolic intermediate biosynthesis; chorismate biosynthesis; chorismate from D-erythrose 4-phosphate and phosphoenolpyruvate: step 2/7. Its function is as follows. Catalyzes the conversion of 3-deoxy-D-arabino-heptulosonate 7-phosphate (DAHP) to dehydroquinate (DHQ). This chain is 3-dehydroquinate synthase, found in Bacillus velezensis (strain DSM 23117 / BGSC 10A6 / LMG 26770 / FZB42) (Bacillus amyloliquefaciens subsp. plantarum).